The sequence spans 867 residues: Coiled-coil domain-containing protein 178 (867 aa).

4 coiled-coil regions span residues 153-204 (DEKC…KIDS), 233-414 (WHLE…ENQY), 445-470 (ACTK…TNES), and 662-696 (MIFY…KNKF).

The polypeptide is Coiled-coil domain-containing protein 178 (CCDC178) (Homo sapiens (Human)).